Reading from the N-terminus, the 329-residue chain is Protein STRICTOSIDINE SYNTHASE-LIKE 11 (329 aa).

The signal sequence occupies residues 1–23; that stretch reads MMRSFVSLISLLLLLSFSSSVLS. Asn37 and Asn79 each carry an N-linked (GlcNAc...) asparagine glycan.

This sequence belongs to the strictosidine synthase family.

Its subcellular location is the vacuole. It carries out the reaction 3alpha(S)-strictosidine + H2O = secologanin + tryptamine. It participates in alkaloid biosynthesis; 3alpha(S)-strictosidine biosynthesis; 3alpha(S)-strictosidine from secologanin and tryptamine: step 1/1. Its function is as follows. Catalyzes the stereospecific condensation of tryptamine with secologanin to form strictosidine, the key intermediate of indole alkaloid biosynthesis. This is Protein STRICTOSIDINE SYNTHASE-LIKE 11 from Arabidopsis thaliana (Mouse-ear cress).